Consider the following 399-residue polypeptide: CCA-adding enzyme (399 aa).

ATP-binding residues include Gly33 and Arg36. Gly33 and Arg36 together coordinate CTP. Mg(2+)-binding residues include Asp46 and Asp48. Arg117, Asp160, Arg163, Arg166, and Arg169 together coordinate ATP. The CTP site is built by Arg117, Asp160, Arg163, Arg166, and Arg169.

This sequence belongs to the tRNA nucleotidyltransferase/poly(A) polymerase family. Bacterial CCA-adding enzyme type 3 subfamily. As to quaternary structure, homodimer. Mg(2+) serves as cofactor.

The catalysed reaction is a tRNA precursor + 2 CTP + ATP = a tRNA with a 3' CCA end + 3 diphosphate. It carries out the reaction a tRNA with a 3' CCA end + 2 CTP + ATP = a tRNA with a 3' CCACCA end + 3 diphosphate. Functionally, catalyzes the addition and repair of the essential 3'-terminal CCA sequence in tRNAs without using a nucleic acid template. Adds these three nucleotides in the order of C, C, and A to the tRNA nucleotide-73, using CTP and ATP as substrates and producing inorganic pyrophosphate. tRNA 3'-terminal CCA addition is required both for tRNA processing and repair. Also involved in tRNA surveillance by mediating tandem CCA addition to generate a CCACCA at the 3' terminus of unstable tRNAs. While stable tRNAs receive only 3'-terminal CCA, unstable tRNAs are marked with CCACCA and rapidly degraded. The protein is CCA-adding enzyme of Lactobacillus helveticus (strain DPC 4571).